A 204-amino-acid chain; its full sequence is AFG2-interacting ribosome maturation factor (204 aa).

In terms of assembly, part of the 55LCC heterohexameric ATPase complex. Does not associate with pre-60S ribosomal particles.

The protein resides in the nucleus. The protein localises to the cytoplasm. Part of the 55LCC heterohexameric ATPase complex which is chromatin-associated and promotes replisome proteostasis to maintain replication fork progression and genome stability. Required for replication fork progression, sister chromatid cohesion, and chromosome stability. The ATPase activity is specifically enhanced by replication fork DNA and is coupled to cysteine protease-dependent cleavage of replisome substrates in response to replication fork damage. Uses ATPase activity to process replisome substrates in S-phase, facilitating their proteolytic turnover from chromatin to ensure DNA replication and mitotic fidelity. Involved in the cytoplasmic maturation steps of pre-60S ribosomal particles by promoting the release of shuttling protein RSL24D1/RLP24 from the pre-ribosomal particles. The chain is AFG2-interacting ribosome maturation factor (airim) from Xenopus tropicalis (Western clawed frog).